The following is a 307-amino-acid chain: Plasmodesmata-located protein 2 (307 aa).

Positions Met1 to Val23 are cleaved as a signal peptide. Residues Val24–Thr275 are Extracellular-facing. Gnk2-homologous domains are found at residues Thr33–Phe136 and Gly141–Asn240. Disulfide bonds link Cys40–Cys114, Cys90–Cys99, Cys102–Cys127, Cys149–Cys218, Cys194–Cys203, and Cys206–Cys231. The segment covering Ser246–Ser268 has biased composition (low complexity). Residues Ser246–Gly270 are disordered. A helical membrane pass occupies residues Val276 to Ala296. A necessary and sufficient for plasmodesmal targeting region spans residues Val276–Ala296. Residues Lys297–Tyr307 are Cytoplasmic-facing.

Belongs to the cysteine-rich repeat secretory protein family. Plasmodesmata-located proteins (PDLD) subfamily. In terms of assembly, (Microbial infection) Interacts with Grapevine fanleaf virus (GFLV) 2B-MP. Highly expressed in inflorescence shoot apex. Uniformly expressed within the inflorescence meristem with the exception of a boundary zone between floral primordia and the meristem where the expression is weaker (at protein level).

The protein resides in the cell membrane. It is found in the cell junction. The protein localises to the plasmodesma. Its function is as follows. Modulates cell-to-cell trafficking. This Arabidopsis thaliana (Mouse-ear cress) protein is Plasmodesmata-located protein 2.